The sequence spans 64 residues: Conotoxin Am1.1 (64 aa).

Positions Met-1–Ala-22 are cleaved as a signal peptide. The propeptide occupies Arg-23–Lys-49. Pro-60 is subject to 4-hydroxyproline; partial; in major form.

The protein belongs to the conotoxin T superfamily. In terms of processing, contains 2 disulfide bonds. Expressed by the venom duct.

The protein localises to the secreted. In terms of biological role, probable toxin that inhibits ion channels. The protein is Conotoxin Am1.1 of Conus amadis (Amadis cone).